The chain runs to 295 residues: Putative F-box protein At5g44220 (295 aa).

In terms of domain architecture, F-box spans 56-102 (STNSDLLPMDLIKEILKRLPAKTLARFLCVSKLWSSIIRSRDLMKLF).

The polypeptide is Putative F-box protein At5g44220 (Arabidopsis thaliana (Mouse-ear cress)).